The chain runs to 299 residues: Regucalcin (299 aa).

Residue Glu-18 participates in a divalent metal cation binding. The substrate site is built by Arg-101, Asn-103, and Glu-121. N6-succinyllysine is present on Lys-144. Positions 154 and 204 each coordinate a divalent metal cation. Catalysis depends on Asp-204, which acts as the Proton donor/acceptor. N6-succinyllysine is present on residues Lys-244 and Lys-253.

It belongs to the SMP-30/CGR1 family. In terms of assembly, monomer. Requires Zn(2+) as cofactor. Mn(2+) serves as cofactor. Ca(2+) is required as a cofactor. The cofactor is Mg(2+).

Its subcellular location is the cytoplasm. The catalysed reaction is D-glucono-1,5-lactone + H2O = D-gluconate + H(+). Functionally, gluconolactonase with low activity towards other sugar lactones, including gulonolactone and galactonolactone. Can also hydrolyze diisopropyl phosphorofluoridate and phenylacetate (in vitro). Calcium-binding protein. Modulates Ca(2+) signaling, and Ca(2+)-dependent cellular processes and enzyme activities. The polypeptide is Regucalcin (RGN) (Macaca fascicularis (Crab-eating macaque)).